The primary structure comprises 356 residues: MQKDALNNVHITDEQVLMTPEQLKAAFPLSLQQEAQIADSRKSISDIIAGRDPRLLVVCGPCSIHDPETALEYARRFKALAAEVSDSLYLVMRVYFEKPRTTVGWKGLINDPHMDGSFDVEAGLQIARKLLLELVNMGLPLATEALDPNSPQYLGDLFSWSAIGARTTESQTHREMASGLSMPVGFKNGTDGSLATAINAMRAAAQPHRFVGINQAGQVALLQTQGNPDGHVILRGGKAPNYSPADVAQCEKEMEQAGLRPSLMVDCSHGNSNKDYRRQPAVAESVVAQIKDGNRSIIGLMIESNIHEGNQSSEQPRSEMKYGVSVTDACISWEMTDALLREIHQDLNGQLTARVA.

The protein belongs to the class-I DAHP synthase family. A divalent metal cation is required as a cofactor.

It carries out the reaction D-erythrose 4-phosphate + phosphoenolpyruvate + H2O = 7-phospho-2-dehydro-3-deoxy-D-arabino-heptonate + phosphate. It functions in the pathway metabolic intermediate biosynthesis; chorismate biosynthesis; chorismate from D-erythrose 4-phosphate and phosphoenolpyruvate: step 1/7. With respect to regulation, specifically feedback inhibited by tyrosine with 50% inhibition observed at 9 microM tyrosine, pH 7.0. Stereospecific condensation of phosphoenolpyruvate (PEP) and D-erythrose-4-phosphate (E4P) giving rise to 3-deoxy-D-arabino-heptulosonate-7-phosphate (DAHP). The protein is Phospho-2-dehydro-3-deoxyheptonate aldolase, Tyr-sensitive (aroF) of Escherichia coli (strain K12).